Here is a 749-residue protein sequence, read N- to C-terminus: Protein O-mannosyl-transferase 2 (749 aa).

The interval 1 to 30 (MAASVVKTPKCPRRGSAKEQQSKASPKSNN) is disordered. A helical membrane pass occupies residues 34–54 (NWHWWILLASVFLITFATRFY). Residues N78, N104, and N117 are each glycosylated (N-linked (GlcNAc...) asparagine). 5 helical membrane-spanning segments follow: residues 126-146 (YFCT…VYDL), 173-193 (ILLD…MVKI), 204-224 (SVRW…TISV), 226-246 (FVGL…LWLI), and 266-286 (IALI…HLSV). 2 N-linked (GlcNAc...) asparagine glycosylation sites follow: N288 and N312. 3 MIR domains span residues 316–372 (PRDV…IKPH), 382–438 (LQLL…VLIV), and 443–499 (NETV…VEDN). N443 carries N-linked (GlcNAc...) asparagine glycosylation. The next 4 helical transmembrane spans lie at 572–592 (IWWS…GNAI), 645–665 (LGAA…FWAM), 669–689 (LYFH…GVMF), and 703–723 (VLLG…SPLA). N735 carries N-linked (GlcNAc...) asparagine glycosylation.

The protein belongs to the glycosyltransferase 39 family. In terms of assembly, interacts with Rt/POMT1.

The protein localises to the endoplasmic reticulum membrane. The catalysed reaction is a di-trans,poly-cis-dolichyl beta-D-mannosyl phosphate + L-seryl-[protein] = 3-O-(alpha-D-mannosyl)-L-seryl-[protein] + a di-trans,poly-cis-dolichyl phosphate + H(+). It carries out the reaction a di-trans,poly-cis-dolichyl beta-D-mannosyl phosphate + L-threonyl-[protein] = 3-O-(alpha-D-mannosyl)-L-threonyl-[protein] + a di-trans,poly-cis-dolichyl phosphate + H(+). It participates in protein modification; protein glycosylation. Rt/POMT1 and tw/POMT2 function as a protein O-mannosyltransferase in association with each other to generate and maintain normal muscle development. This chain is Protein O-mannosyl-transferase 2, found in Drosophila pseudoobscura pseudoobscura (Fruit fly).